The following is a 177-amino-acid chain: Adenine phosphoribosyltransferase (177 aa).

This sequence belongs to the purine/pyrimidine phosphoribosyltransferase family. As to quaternary structure, homodimer.

The protein localises to the cytoplasm. It carries out the reaction AMP + diphosphate = 5-phospho-alpha-D-ribose 1-diphosphate + adenine. It functions in the pathway purine metabolism; AMP biosynthesis via salvage pathway; AMP from adenine: step 1/1. Catalyzes a salvage reaction resulting in the formation of AMP, that is energically less costly than de novo synthesis. The chain is Adenine phosphoribosyltransferase from Chlorobium phaeobacteroides (strain DSM 266 / SMG 266 / 2430).